Here is a 140-residue protein sequence, read N- to C-terminus: DegV domain-containing 15.5 kDa protein (140 aa).

The 137-residue stretch at 4 to 140 folds into the DegV domain; that stretch reads QIIVTDSTSD…ELVLLQSKKI (137 aa). 2 residues coordinate hexadecanoate: Thr61 and Ser93.

Functionally, may bind long-chain fatty acids, such as palmitate, and may play a role in lipid transport or fatty acid metabolism. In Staphylococcus aureus, this protein is DegV domain-containing 15.5 kDa protein.